The primary structure comprises 606 residues: Atypical protein kinase C (606 aa).

A PB1 domain is found at 30–113; sequence SITVKTAYNG…SQLVIHVFPN (84 aa). The Phorbol-ester/DAG-type zinc-finger motif lies at 145 to 195; the sequence is GHIFQAKRFNRRAFCAYCQDRIWGLGRQGFKCIQCKLLVHKKCHKLVQKHC. The Protein kinase domain occupies 264-532; that stretch reads FELIRVIGRG…FMDIVSHPFF (269 aa). Residues 270 to 278 and Lys-293 contribute to the ATP site; that span reads IGRGSYAKV. Asp-388 (proton acceptor) is an active-site residue. The 72-residue stretch at 533 to 604 folds into the AGC-kinase C-terminal domain; it reads KNMDWELLER…VNPLLMSLED (72 aa).

It belongs to the protein kinase superfamily. AGC Ser/Thr protein kinase family. PKC subfamily. Interacts with baz; the interaction is required for apical localization of aPKC in neuroblasts and epithelial cells. Interacts with Dap160; the interaction promotes aPKC apical localization and kinase activity. Interacts with and phosphorylates l(2)gl and yrt. Interacts with crb and ref(2)P. Forms a complex with baz, fz and Patj. As to expression, expressed in the testis. In spermatid cysts, localizes near the tips of spermatid flagellar axonemes (at protein level). Detectable in freshly laid eggs before onset of zygotic transcription so is deposited in the egg during oogenesis. At the cellular blastoderm stage, present in all cells except the pole cells. During gastrulation, strongly expressed in tissues undergoing morphogenetic movements such as invaginating mesoderm, proctodeum and cephalic furrow. Strongly expressed in neuroblasts.

The protein localises to the cytoplasm. It is found in the cell cortex. It localises to the apicolateral cell membrane. It catalyses the reaction L-seryl-[protein] + ATP = O-phospho-L-seryl-[protein] + ADP + H(+). The catalysed reaction is L-threonyl-[protein] + ATP = O-phospho-L-threonyl-[protein] + ADP + H(+). Functionally, serine/threonine protein kinase which is required for apico-basal cell polarity in the germ line as well as in epithelial and neural precursor cells, for epithelial planar cell polarity and for cell proliferation. During oocyte development, required for the posterior translocation of oocyte specification factors and for the posterior establishment of the microtubule organizing center within the presumptive oocyte. Phosphorylates l(2)gl which restricts l(2)gl activity to the oocyte posterior and regulates posterior enrichment of par-1, leading to establishment of correct oocyte polarity. Essential for apical localization of l(2)gl and par-6 in neuroblasts and for exclusion of mira from the apical cortex. Phosphorylates baz which is required for targeting of baz to the postsynaptic region where it is involved in actin organization, and for apical exclusion of baz which is necessary for establishment of the apical/lateral border in epithelial cells. Phosphorylates yrt which prevents its premature apical localization and is necessary for correct epithelial cell polarization. Required for the establishment of mitotic spindle orientation during symmetric division of epithelial cells and for apical exclusion of raps/Pins. Involved in symmetric adherens junction positioning during embryogenesis. Required for polarization of the spermatid cyst which is necessary for sperm differentiation. Required for stimulation of the Toll signaling pathway which activates Dif and dl and plays a role in innate immunity. Plays a role in memory enhancement. This chain is Atypical protein kinase C, found in Drosophila melanogaster (Fruit fly).